The primary structure comprises 672 residues: uncharacterized protein (672 aa).

Positions 1 to 10 (MAKSDGDDPL) are enriched in basic and acidic residues. The disordered stretch occupies residues 1–41 (MAKSDGDDPLRPASPRLRSSRRHSLRYSAYTGGPDPLAPPV).

This is an uncharacterized protein from Mycobacterium bovis (strain ATCC BAA-935 / AF2122/97).